Consider the following 433-residue polypeptide: Alpha-(1,3)-fucosyltransferase 4 (433 aa).

Residues 1-52 (MAPARQELQHESRCRPSRTVDAWRAAVATRGRHMETPGYRRRTRCGGWGLPR) lie on the Cytoplasmic side of the membrane. The helical; Signal-anchor for type II membrane protein transmembrane segment at 53–74 (SVSSLAAVGLLCTALTTFICWG) threads the bilayer. Over 75-433 (QLPPLPWASP…IHNLADWFQR (359 aa)) the chain is Lumenal. N117 and N218 each carry an N-linked (GlcNAc...) asparagine glycan.

This sequence belongs to the glycosyltransferase 10 family. Highest expression in stomach and colon. It is also expressed in the lung, testis, uterus, small intestine and to a lesser extent in spleen, and ovary. Present in trace amounts in brain, thymus, heart, smooth muscle, kidney and bone marrow. Not found in liver, salivary gland and pancreas.

It is found in the golgi apparatus. It localises to the golgi stack membrane. The enzyme catalyses a beta-D-galactosyl-(1-&gt;4)-N-acetyl-beta-D-glucosaminyl derivative + GDP-beta-L-fucose = a beta-D-galactosyl-(1-&gt;4)-[alpha-L-fucosyl-(1-&gt;3)]-N-acetyl-beta-D-glucosaminyl derivative + GDP + H(+). The catalysed reaction is an N-acetyl-alpha-neuraminyl-(2-&gt;3)-beta-D-galactosyl-(1-&gt;4)-N-acetyl-beta-D-glucosaminyl derivative + GDP-beta-L-fucose = an alpha-Neu5Ac-(2-&gt;3)-beta-D-Gal-(1-&gt;4)-[alpha-L-Fuc-(1-&gt;3)]-beta-D-GlcNAc derivative + GDP + H(+). It carries out the reaction an alpha-Neu5Ac-(2-&gt;3)-beta-D-Gal-(1-&gt;4)-beta-D-GlcNAc-(1-&gt;3)-beta-D-Gal-(1-&gt;4)-beta-D-GlcNAc derivative + GDP-beta-L-fucose = an alpha-Neu5Ac-(2-&gt;3)-beta-D-Gal-(1-&gt;4)-beta-D-GlcNAc-(1-&gt;3)-beta-D-Gal-(1-&gt;4)-[alpha-L-Fuc-(1-&gt;3)]-beta-D-GlcNAc derivative + GDP + H(+). It catalyses the reaction an alpha-Neu5Ac-(2-&gt;3)-beta-D-Gal-(1-&gt;4)-beta-D-GlcNAc6S derivative + GDP-beta-L-fucose = an alpha-Neu5Ac-(2-&gt;3)-beta-D-Gal-(1-&gt;4)-[alpha-L-Fuc-(1-&gt;3)]-beta-D-GlcNAc6S derivative + GDP + H(+). It participates in protein modification; protein glycosylation. In terms of biological role, catalyzes alpha(1-&gt;3) linkage of fucosyl moiety transferred from GDP-beta-L-fucose to N-acetyl glucosamine (GlcNAc) within type 2 lactosamine (LacNAc, Gal-beta(1-&gt;4)GlcNAc) glycan attached to N- or O-linked glycoproteins. Robustly fucosylates nonsialylated distal LacNAc unit of the polylactosamine chain to form Lewis X antigen (CD15), a glycan determinant known to mediate important cellular functions in development and immunity. Fucosylates with lower efficiency sialylated LacNAc acceptors to form sialyl Lewis X and 6-sulfo sialyl Lewis X determinants that serve as recognition epitopes for C-type lectins. Together with FUT7 contributes to SELE, SELL and SELP selectin ligand biosynthesis and selectin-dependent lymphocyte homing, leukocyte migration and blood leukocyte homeostasis. In a cell type specific manner, may also fucosylate the internal LacNAc unit of the polylactosamine chain to form VIM-2 antigen that serves as recognition epitope for SELE. The polypeptide is Alpha-(1,3)-fucosyltransferase 4 (Fut4) (Mus musculus (Mouse)).